An 87-amino-acid chain; its full sequence is UPF0250 protein BUAPTUC7_482 (87 aa).

It belongs to the UPF0250 family.

In Buchnera aphidicola subsp. Acyrthosiphon pisum (strain Tuc7), this protein is UPF0250 protein BUAPTUC7_482.